Consider the following 207-residue polypeptide: Small ribosomal subunit protein uS4 (207 aa).

Residues 26–47 (AINNKNYKPGQQGNSSSISKPS) are disordered. Positions 28–39 (NNKNYKPGQQGN) are enriched in polar residues. The region spanning 95–158 (RRLDAVVYRL…KQIPIVIGAI (64 aa)) is the S4 RNA-binding domain.

This sequence belongs to the universal ribosomal protein uS4 family. As to quaternary structure, part of the 30S ribosomal subunit. Contacts protein S5. The interaction surface between S4 and S5 is involved in control of translational fidelity.

Functionally, one of the primary rRNA binding proteins, it binds directly to 16S rRNA where it nucleates assembly of the body of the 30S subunit. Its function is as follows. With S5 and S12 plays an important role in translational accuracy. This Orientia tsutsugamushi (strain Boryong) (Rickettsia tsutsugamushi) protein is Small ribosomal subunit protein uS4.